The sequence spans 429 residues: Enolase (429 aa).

Glutamine 166 is a (2R)-2-phosphoglycerate binding site. Glutamate 208 functions as the Proton donor in the catalytic mechanism. Mg(2+) contacts are provided by aspartate 245, glutamate 289, and aspartate 316. Lysine 341, arginine 370, serine 371, and lysine 392 together coordinate (2R)-2-phosphoglycerate. Lysine 341 acts as the Proton acceptor in catalysis.

It belongs to the enolase family. As to quaternary structure, component of the RNA degradosome, a multiprotein complex involved in RNA processing and mRNA degradation. Requires Mg(2+) as cofactor.

The protein localises to the cytoplasm. It is found in the secreted. Its subcellular location is the cell surface. It catalyses the reaction (2R)-2-phosphoglycerate = phosphoenolpyruvate + H2O. Its pathway is carbohydrate degradation; glycolysis; pyruvate from D-glyceraldehyde 3-phosphate: step 4/5. Its function is as follows. Catalyzes the reversible conversion of 2-phosphoglycerate (2-PG) into phosphoenolpyruvate (PEP). It is essential for the degradation of carbohydrates via glycolysis. The protein is Enolase of Acinetobacter baumannii (strain AB307-0294).